The chain runs to 73 residues: Antitoxin VapB20 (73 aa).

Functionally, antitoxin component of a type II toxin-antitoxin (TA) system. Upon expression in E.coli neutralizes the toxic effect of cognate toxin VapC20. This is Antitoxin VapB20 (vapB20) from Mycobacterium tuberculosis (strain ATCC 25618 / H37Rv).